Reading from the N-terminus, the 128-residue chain is Large ribosomal subunit protein eL22 (128 aa).

This sequence belongs to the eukaryotic ribosomal protein eL22 family. In terms of assembly, component of the large ribosomal subunit.

It is found in the cytoplasm. Its function is as follows. Component of the large ribosomal subunit. The ribosome is a large ribonucleoprotein complex responsible for the synthesis of proteins in the cell. The sequence is that of Large ribosomal subunit protein eL22 (RPL22) from Gallus gallus (Chicken).